Here is a 274-residue protein sequence, read N- to C-terminus: NH(3)-dependent NAD(+) synthetase (274 aa).

46–53 (GISGGQDS) provides a ligand contact to ATP. Asp-52 contributes to the Mg(2+) binding site. A deamido-NAD(+)-binding site is contributed by Arg-140. Residue Thr-160 coordinates ATP. Position 165 (Glu-165) interacts with Mg(2+). Deamido-NAD(+) is bound by residues Lys-173 and Asp-180. Residues Lys-189 and Thr-211 each contribute to the ATP site. Residue 260 to 261 (HK) participates in deamido-NAD(+) binding.

This sequence belongs to the NAD synthetase family. As to quaternary structure, homodimer.

The catalysed reaction is deamido-NAD(+) + NH4(+) + ATP = AMP + diphosphate + NAD(+) + H(+). The protein operates within cofactor biosynthesis; NAD(+) biosynthesis; NAD(+) from deamido-NAD(+) (ammonia route): step 1/1. Functionally, catalyzes the ATP-dependent amidation of deamido-NAD to form NAD. Uses ammonia as a nitrogen source. This Streptococcus gordonii (strain Challis / ATCC 35105 / BCRC 15272 / CH1 / DL1 / V288) protein is NH(3)-dependent NAD(+) synthetase.